The primary structure comprises 184 residues: MNSETYWIISSNNWDLAESFGFNTNILETNLINLAVVIGVLVYFGKGVLTTILNNRKETILSTIRDAEERYQEAIEKLNQARTQLEQAKAKAEEIRVNGVLQMEREKQELIKAADEDSKRLEETKNLTIRFAEQKAIVQIRQQISRLTVKRALEIINSRLNLDLHARMIDYHIGLFKAMKTSAE.

Residues 31–53 form a helical membrane-spanning segment; that stretch reads LINLAVVIGVLVYFGKGVLTTIL.

The protein belongs to the ATPase B chain family. As to quaternary structure, F-type ATPases have 2 components, F(1) - the catalytic core - and F(0) - the membrane proton channel. F(1) has five subunits: alpha(3), beta(3), gamma(1), delta(1), epsilon(1). F(0) has four main subunits: a(1), b(1), b'(1) and c(10-14). The alpha and beta chains form an alternating ring which encloses part of the gamma chain. F(1) is attached to F(0) by a central stalk formed by the gamma and epsilon chains, while a peripheral stalk is formed by the delta, b and b' chains.

Its subcellular location is the plastid. It is found in the chloroplast thylakoid membrane. F(1)F(0) ATP synthase produces ATP from ADP in the presence of a proton or sodium gradient. F-type ATPases consist of two structural domains, F(1) containing the extramembraneous catalytic core and F(0) containing the membrane proton channel, linked together by a central stalk and a peripheral stalk. During catalysis, ATP synthesis in the catalytic domain of F(1) is coupled via a rotary mechanism of the central stalk subunits to proton translocation. Functionally, component of the F(0) channel, it forms part of the peripheral stalk, linking F(1) to F(0). This chain is ATP synthase subunit b, chloroplastic, found in Staurastrum punctulatum (Green alga).